Here is a 351-residue protein sequence, read N- to C-terminus: ADP-glucose phosphorylase (351 aa).

The segment at Met-1 to Cys-63 is disordered. Arg-41–Arg-44 provides a ligand contact to ADP-alpha-D-glucose. The Zn(2+) site is built by Cys-63 and Cys-66. ADP-alpha-D-glucose is bound by residues Glu-72–Ala-74 and Asn-94. Position 133 (His-133) interacts with Zn(2+). ADP-alpha-D-glucose contacts are provided by residues Asn-173 and Gly-179–Met-182. His-184 serves as a coordination point for Zn(2+). The active-site Tele-AMP-histidine intermediate is the His-186. Residue Gln-188 participates in ADP-alpha-D-glucose binding. Zn(2+) contacts are provided by Cys-216, Cys-219, His-255, and His-310. ADP-alpha-D-glucose contacts are provided by residues Gly-321 and Phe-325–Glu-326.

Belongs to the galactose-1-phosphate uridylyltransferase type 1 family. Homodimer. Requires Zn(2+) as cofactor.

The catalysed reaction is alpha-D-glucose 1-phosphate + ADP + H(+) = ADP-alpha-D-glucose + phosphate. Functionally, catalyzes the conversion of ADP-glucose and inorganic phosphate (Pi) into glucose-1-phosphate and ADP. Does not possess galactose-1-phosphate uridylyltransferase activity. The sequence is that of ADP-glucose phosphorylase from Arabidopsis thaliana (Mouse-ear cress).